Consider the following 425-residue polypeptide: Histone-binding protein RBBP4 (425 aa).

Ala-2 is modified (N-acetylalanine). WD repeat units lie at residues Tyr-32–Gly-125, Glu-126–Gly-175, His-176–Phe-223, Gly-225–Asp-270, Ala-271–Glu-314, Ser-315–Gly-371, and Gly-372–Met-404. The segment at Asp-361 to Glu-406 is interaction with HAT1.

This sequence belongs to the WD repeat RBAP46/RBAP48/MSI1 family. Binds directly to histone H4, probably via helix 1 of the histone fold, a region that is not accessible when histone H4 is in chromatin. Interacts with CHAF1A, HDAC1, HDAC2, HDAC3 and HIRA. May also interact with HAT1.

The protein resides in the nucleus. The protein localises to the chromosome. It is found in the telomere. Core histone-binding subunit that may target chromatin assembly factors, chromatin remodeling factors and histone deacetylases to their histone substrates in a manner that is regulated by nucleosomal DNA. Component of several complexes which regulate chromatin metabolism. The protein is Histone-binding protein RBBP4 (RBBP4) of Gallus gallus (Chicken).